Here is a 549-residue protein sequence, read N- to C-terminus: MKNINPTQTSAWQALQKHYDEMKDVTIAELFAKDSDRFAKFSATFDDLMLVDFSKNRITEETLAKLQDLAKETDLAGAIKSMFSGEKINRTEDRAVLHVALRNRSNTPIIVDDKDVMPEVNAVLEKMKTFSEAIISGQWKGYTGKAITDVVNIGIGGSDLGPFMVTEALRPYKNHLNMHFVSNVDGTHIAEVLKKVNPETTLFLVASKTFTTQETMTNAHSARDWFLKTAGDEKHVAKHFAALSTNAKAVGEFGIDTANMFEFWDWVGGRYSLWSAIGLSIILSVGFDNFVELLSGAHAMDKHFSTTPAEKNLPVLLALIGIWYNNFFGAETEAILPYDQYMHRFAAYFQQGNMESNGKYVDRNGNAVDYQTGPIIWGEPGTNGQHAFYQLIHQGTKMVPCDFIAPAITHNPLSDHHQKLLSNFFAQTEALAFGKSREVVEQEYRDQGKDPAQLEHVVPFKVFEGNRPTNSILLREITPYSLGALIALYEHKIFTQGAILNIFTFDQWGVELGKQLANRILPELGDDKAISSHDSSTNGLINRYKAWRA.

E355 (proton donor) is an active-site residue. Catalysis depends on residues H386 and K514.

This sequence belongs to the GPI family.

It is found in the cytoplasm. The enzyme catalyses alpha-D-glucose 6-phosphate = beta-D-fructose 6-phosphate. Its pathway is carbohydrate biosynthesis; gluconeogenesis. It participates in carbohydrate degradation; glycolysis; D-glyceraldehyde 3-phosphate and glycerone phosphate from D-glucose: step 2/4. Its function is as follows. Catalyzes the reversible isomerization of glucose-6-phosphate to fructose-6-phosphate. This Salmonella arizonae (strain ATCC BAA-731 / CDC346-86 / RSK2980) protein is Glucose-6-phosphate isomerase.